Reading from the N-terminus, the 142-residue chain is Large ribosomal subunit protein uL13 (142 aa).

This sequence belongs to the universal ribosomal protein uL13 family. In terms of assembly, part of the 50S ribosomal subunit.

Its function is as follows. This protein is one of the early assembly proteins of the 50S ribosomal subunit, although it is not seen to bind rRNA by itself. It is important during the early stages of 50S assembly. This is Large ribosomal subunit protein uL13 from Sodalis glossinidius (strain morsitans).